Consider the following 389-residue polypeptide: Succinate--CoA ligase [ADP-forming] subunit beta (389 aa).

The region spanning 9-244 (KQLLAEYGIP…KTQEDETEVT (236 aa)) is the ATP-grasp domain. Residues K46, 53–55 (GRG), G102, and E107 contribute to the ATP site. Residues N199 and D213 each contribute to the Mg(2+) site. Substrate is bound by residues N264 and 321–323 (GIV).

This sequence belongs to the succinate/malate CoA ligase beta subunit family. As to quaternary structure, heterotetramer of two alpha and two beta subunits. The cofactor is Mg(2+).

It carries out the reaction succinate + ATP + CoA = succinyl-CoA + ADP + phosphate. It catalyses the reaction GTP + succinate + CoA = succinyl-CoA + GDP + phosphate. It participates in carbohydrate metabolism; tricarboxylic acid cycle; succinate from succinyl-CoA (ligase route): step 1/1. In terms of biological role, succinyl-CoA synthetase functions in the citric acid cycle (TCA), coupling the hydrolysis of succinyl-CoA to the synthesis of either ATP or GTP and thus represents the only step of substrate-level phosphorylation in the TCA. The beta subunit provides nucleotide specificity of the enzyme and binds the substrate succinate, while the binding sites for coenzyme A and phosphate are found in the alpha subunit. The sequence is that of Succinate--CoA ligase [ADP-forming] subunit beta from Xanthomonas euvesicatoria pv. vesicatoria (strain 85-10) (Xanthomonas campestris pv. vesicatoria).